We begin with the raw amino-acid sequence, 430 residues long: Aspartate aminotransferase, mitochondrial (430 aa).

The transit peptide at Met-1 to Ala-29 directs the protein to the mitochondrion. Residue Thr-48 is modified to Phosphothreonine. Lys-59 is subject to N6-acetyllysine. Position 65 (Gly-65) interacts with substrate. Lys-73 carries the post-translational modification N6-acetyllysine; alternate. The residue at position 73 (Lys-73) is an N6-succinyllysine; alternate. At Lys-82 the chain carries N6-acetyllysine. At Lys-90 the chain carries N6-acetyllysine; alternate. Lys-90 is subject to N6-succinyllysine; alternate. The residue at position 96 (Tyr-96) is a 3'-nitrotyrosine; alternate. At Tyr-96 the chain carries Phosphotyrosine; alternate. Lys-122 carries the N6-acetyllysine; alternate modification. Lys-122 is modified (N6-succinyllysine; alternate). Ser-143 carries the post-translational modification Phosphoserine. N6-acetyllysine; alternate is present on Lys-159. Lys-159 carries the post-translational modification N6-succinyllysine; alternate. Trp-162 provides a ligand contact to substrate. Residue Lys-185 is modified to N6-acetyllysine; alternate. Lys-185 bears the N6-succinyllysine; alternate mark. Asn-215 lines the substrate pocket. Lys-227 is modified (N6-succinyllysine). Position 234 is an N6-acetyllysine (Lys-234). 2 positions are modified to N6-acetyllysine; alternate: Lys-279 and Lys-296. N6-(pyridoxal phosphate)lysine; alternate is present on Lys-279. Lys-296 is subject to N6-succinyllysine; alternate. Lys-302 is modified (N6-acetyllysine). Residue Lys-309 is modified to N6-acetyllysine; alternate. Lys-309 bears the N6-succinyllysine; alternate mark. Asymmetric dimethylarginine is present on Arg-313. At Lys-338 the chain carries N6-acetyllysine; alternate. Lys-338 is modified (N6-succinyllysine; alternate). Residue Lys-345 is modified to N6-acetyllysine. The residue at position 363 (Lys-363) is an N6-acetyllysine; alternate. Lys-363 carries the N6-succinyllysine; alternate modification. Residues Lys-364 and Lys-387 each carry the N6-acetyllysine modification. Residues Lys-396 and Lys-404 each carry the N6-acetyllysine; alternate modification. An N6-succinyllysine; alternate mark is found at Lys-396 and Lys-404. Arg-407 is a substrate binding site.

The protein belongs to the class-I pyridoxal-phosphate-dependent aminotransferase family. Homodimer. Requires pyridoxal 5'-phosphate as cofactor.

The protein localises to the mitochondrion matrix. Its subcellular location is the cell membrane. The enzyme catalyses L-aspartate + 2-oxoglutarate = oxaloacetate + L-glutamate. It catalyses the reaction L-kynurenine + 2-oxoglutarate = kynurenate + L-glutamate + H2O. Functionally, catalyzes the irreversible transamination of the L-tryptophan metabolite L-kynurenine to form kynurenic acid (KA). As a member of the malate-aspartate shuttle, it has a key role in the intracellular NAD(H) redox balance. Is important for metabolite exchange between mitochondria and cytosol, and for amino acid metabolism. Facilitates cellular uptake of long-chain free fatty acids. The chain is Aspartate aminotransferase, mitochondrial (GOT2) from Oryctolagus cuniculus (Rabbit).